The following is a 213-amino-acid chain: tRNA (guanine-N(7)-)-methyltransferase (213 aa).

The S-adenosyl-L-methionine site is built by Glu-44, Glu-69, Asn-96, and Asp-118. Residue Asp-118 is part of the active site. Residue Lys-122 coordinates substrate. The segment at 124–129 (RHEKRR) is interaction with RNA. Residues Asp-154 and 191 to 194 (TEYE) each bind substrate.

The protein belongs to the class I-like SAM-binding methyltransferase superfamily. TrmB family.

The catalysed reaction is guanosine(46) in tRNA + S-adenosyl-L-methionine = N(7)-methylguanosine(46) in tRNA + S-adenosyl-L-homocysteine. It functions in the pathway tRNA modification; N(7)-methylguanine-tRNA biosynthesis. Catalyzes the formation of N(7)-methylguanine at position 46 (m7G46) in tRNA. The chain is tRNA (guanine-N(7)-)-methyltransferase from Bacillus licheniformis (strain ATCC 14580 / DSM 13 / JCM 2505 / CCUG 7422 / NBRC 12200 / NCIMB 9375 / NCTC 10341 / NRRL NRS-1264 / Gibson 46).